Here is a 364-residue protein sequence, read N- to C-terminus: MSHNSFGHLFRVTTWGESHGLALGCVVDGCPPGITFTEAEIQSFLDKRKPGQSKYTTQRREPDQVRVLSGVLLGEDGVTMTTTGTPISMMIENTDQRSKDYGEIARQYRPGHADYAYDVKYGIRDYRGGGRSSARETAARVAAGAIARKVVPGLEVRGALVSIGAHDIDRSRWNWAEVDNNPFFTPDAGSVEVFADYLDGIRKNGSSVGAIIEIVAEGVPAGIGAPIYGKLDQDIASYLMSINAVKGVEIGNGFEAARLTGEENADEMRMGNDGKPIFLSNHAGGVLGGIATGAPVVARFAVKPTSSILTPRRSINKDGNEVDVMTRGRHDPCVGIRAVPIGEAMVACAIADHYLRHRGQTGRV.

Arg-48 lines the NADP(+) pocket. FMN is bound by residues 131–133, 243–244, Gly-288, 303–307, and Arg-329; these read RSS, NA, and KPTSS.

This sequence belongs to the chorismate synthase family. In terms of assembly, homotetramer. The cofactor is FMNH2.

The enzyme catalyses 5-O-(1-carboxyvinyl)-3-phosphoshikimate = chorismate + phosphate. It participates in metabolic intermediate biosynthesis; chorismate biosynthesis; chorismate from D-erythrose 4-phosphate and phosphoenolpyruvate: step 7/7. Catalyzes the anti-1,4-elimination of the C-3 phosphate and the C-6 proR hydrogen from 5-enolpyruvylshikimate-3-phosphate (EPSP) to yield chorismate, which is the branch point compound that serves as the starting substrate for the three terminal pathways of aromatic amino acid biosynthesis. This reaction introduces a second double bond into the aromatic ring system. This chain is Chorismate synthase, found in Brucella melitensis biotype 2 (strain ATCC 23457).